The following is a 61-amino-acid chain: Large ribosomal subunit protein bL32 (61 aa).

Basic residues predominate over residues 1 to 16 (MAVPKRKTSPSKRGMR). The tract at residues 1–41 (MAVPKRKTSPSKRGMRRSADALKASTYVEDKNSGELRRPHH) is disordered. Basic and acidic residues predominate over residues 28–41 (VEDKNSGELRRPHH).

The protein belongs to the bacterial ribosomal protein bL32 family.

The polypeptide is Large ribosomal subunit protein bL32 (Rhizobium rhizogenes (strain K84 / ATCC BAA-868) (Agrobacterium radiobacter)).